Reading from the N-terminus, the 444-residue chain is UDP-N-acetylmuramate--L-alanine ligase (444 aa).

110-116 (GAHGKTS) is a binding site for ATP.

It belongs to the MurCDEF family. Phosphorylated by StkP in vitro. Dephosphorylated by PhpP in vitro.

It is found in the cytoplasm. It carries out the reaction UDP-N-acetyl-alpha-D-muramate + L-alanine + ATP = UDP-N-acetyl-alpha-D-muramoyl-L-alanine + ADP + phosphate + H(+). The protein operates within cell wall biogenesis; peptidoglycan biosynthesis. In terms of biological role, cell wall formation. This chain is UDP-N-acetylmuramate--L-alanine ligase, found in Streptococcus pneumoniae serotype 4 (strain ATCC BAA-334 / TIGR4).